A 2294-amino-acid chain; its full sequence is Protein Ycf2 (2294 aa).

An ATP-binding site is contributed by 1648–1655; it reads GSIGTGRS.

Belongs to the Ycf2 family.

The protein resides in the plastid. Its subcellular location is the chloroplast stroma. Functionally, probable ATPase of unknown function. Its presence in a non-photosynthetic plant (Epifagus virginiana) and experiments in tobacco indicate that it has an essential function which is probably not related to photosynthesis. The protein is Protein Ycf2 of Arabidopsis thaliana (Mouse-ear cress).